The following is a 713-amino-acid chain: Vacuolar amino acid transporter 4 (713 aa).

The tract at residues 1-33 (MVTNNGDGEHLGIRRNGNLRHPSNNMKIPRRAQ) is disordered. Topologically, residues 1 to 242 (MVTNNGDGEH…IDKVPFLTRN (242 aa)) are vacuolar. Over residues 21–33 (HPSNNMKIPRRAQ) the composition is skewed to polar residues. A Phosphoserine modification is found at Ser88. The segment at 99-121 (RSSVSHGNEAIPRVNPTKNSSAS) is disordered. Ser130 and Ser165 each carry phosphoserine. The interval 200–233 (KRQEHQLNDSASSDFTSHESDSINQSSPSSNQDI) is disordered. A compositionally biased stretch (low complexity) spans 221–231 (SINQSSPSSNQ). A helical transmembrane segment spans residues 243–263 (FLEFLYVFGHFAGESFEDDFI). Over 264–301 (PDSSNMMIRGEDERSALLSRPDHMKVLPSAKGTTSTKK) the chain is Cytoplasmic. Residues 302-322 (VFLILLKSFIGTGVLFLPNAF) traverse the membrane as a helical segment. Residues 323–326 (HNGG) lie on the Vacuolar side of the membrane. The chain crosses the membrane as a helical span at residues 327–347 (LFFSVSMLAFFGIYSYWCYYI). The Cytoplasmic portion of the chain corresponds to 348–373 (LVQAKSSCGVSSFGDIGLKLYGPWMR). Residues 374–394 (IIILFSLVITQVGFSGAYMIF) traverse the membrane as a helical segment. Residues 395–410 (TAKNLQAFLDNVFHVG) lie on the Vacuolar side of the membrane. The helical transmembrane segment at 411–431 (VLPLSYLMVFQTIIFIPLSFI) threads the bilayer. Residues 432 to 438 (RNISKLS) are Cytoplasmic-facing. Residues 439–459 (LPSLLANFFIMAGLVIVIIFT) form a helical membrane-spanning segment. Residues 460–483 (AKRLFFDLMGTPAMGVVYGLNADR) are Vacuolar-facing. Residues 484 to 504 (WTLFIGTAIFAFEGIGLIIPV) form a helical membrane-spanning segment. Residues 505 to 515 (QDSMRNPEKFP) lie on the Cytoplasmic side of the membrane. The chain crosses the membrane as a helical span at residues 516–536 (LVLALVILTATILFISIATLG). The Vacuolar portion of the chain corresponds to 537–561 (YLAYGSNVQTVILLNLPQSNIFVNL). The chain crosses the membrane as a helical span at residues 562-582 (IQLFYSIAIMLSTPLQLFPAI). The Cytoplasmic portion of the chain corresponds to 583–621 (KIIENKFFPKFTKIYVKHDDLTTRVELRPNSGKLNWKIK). The chain crosses the membrane as a helical span at residues 622–642 (WLKNFIRSIIVIIVVSIAYFG). The Vacuolar portion of the chain corresponds to 643 to 648 (SDNLDK). Residues 649-669 (FVSVIGSLACIPLVYIYPSML) traverse the membrane as a helical segment. At 670–692 (HLRGNSLPETKGEFWRFKPMLDT) the chain is on the cytoplasmic side. The helical transmembrane segment at 693 to 711 (ILIFFGIASMLYTSYQSIF) threads the bilayer. At 712–713 (GV) the chain is on the vacuolar side.

This sequence belongs to the amino acid/polyamine transporter 2 family.

Its subcellular location is the vacuole membrane. Involved in amino acid efflux from the vacuole to the cytoplasm. Capable of transporting large neutral amino acids including tyrosine, glutamine, asparagine, isoleucine and leucine. This is Vacuolar amino acid transporter 4 (AVT4) from Saccharomyces cerevisiae (strain ATCC 204508 / S288c) (Baker's yeast).